The following is a 316-amino-acid chain: Biotin synthase (316 aa).

The Radical SAM core domain maps to 39 to 263; the sequence is NAIQCSTLLS…LFPKAYVRLS (225 aa). [4Fe-4S] cluster is bound by residues C54, C58, and C61. C98, C129, C189, and R261 together coordinate [2Fe-2S] cluster.

The protein belongs to the radical SAM superfamily. Biotin synthase family. As to quaternary structure, homodimer. The cofactor is [4Fe-4S] cluster. [2Fe-2S] cluster serves as cofactor.

The catalysed reaction is (4R,5S)-dethiobiotin + (sulfur carrier)-SH + 2 reduced [2Fe-2S]-[ferredoxin] + 2 S-adenosyl-L-methionine = (sulfur carrier)-H + biotin + 2 5'-deoxyadenosine + 2 L-methionine + 2 oxidized [2Fe-2S]-[ferredoxin]. Its pathway is cofactor biosynthesis; biotin biosynthesis; biotin from 7,8-diaminononanoate: step 2/2. Catalyzes the conversion of dethiobiotin (DTB) to biotin by the insertion of a sulfur atom into dethiobiotin via a radical-based mechanism. The protein is Biotin synthase of Acidithiobacillus ferrooxidans (strain ATCC 23270 / DSM 14882 / CIP 104768 / NCIMB 8455) (Ferrobacillus ferrooxidans (strain ATCC 23270)).